Reading from the N-terminus, the 843-residue chain is Alpha-L-fucosidase 2 (843 aa).

The first 27 residues, 1-27 (MAEKSSFFVHFSCLLLLLTIIITCGEG), serve as a signal peptide directing secretion. Asn62, Asn253, Asn365, and Asn605 each carry an N-linked (GlcNAc...) asparagine glycan.

This sequence belongs to the glycosyl hydrolase 95 family. As to expression, ubiquitous. Highest expression in vascular tissues, leaf trichomes, root elongation zone and emerging lateral roots.

It localises to the secreted. The protein resides in the extracellular space. The protein localises to the apoplast. It carries out the reaction an alpha-L-fucoside + H2O = L-fucose + an alcohol. Hydrolyzes alpha-1,2-linked fucose. Also active on fucosylated xyloglucan oligosaccharides. No activity with 3-fucosyllactose, p-nitrophenyl-alpha-I-fucopyranoside, lacto-N-fucopentaose II, lacto-N-fucopentaose III or alpha 1,6-fucosylated chitopentaose. Involved in apoplastic xyloglucan metabolism. The protein is Alpha-L-fucosidase 2 (FUC95A) of Arabidopsis thaliana (Mouse-ear cress).